We begin with the raw amino-acid sequence, 185 residues long: N-alpha-acetyltransferase 30 (185 aa).

Residues 31–179 (IEYIPYQGES…DAVRLLLPLN (149 aa)) form the N-acetyltransferase domain.

It belongs to the acetyltransferase family. MAK3 subfamily.

In terms of biological role, probable catalytic component of a complex displaying alpha (N-terminal) acetyltransferase activity. The chain is N-alpha-acetyltransferase 30 from Dictyostelium discoideum (Social amoeba).